The following is a 400-amino-acid chain: Methylthioribose kinase (400 aa).

Residues Asn-40, Lys-57, and 111–113 contribute to the ATP site; that span reads EDL. Position 229 (Asp-229) interacts with substrate. 246-248 contributes to the ATP binding site; it reads DAE. Arg-344 lines the substrate pocket.

It belongs to the methylthioribose kinase family. In terms of assembly, homodimer.

It carries out the reaction 5-(methylsulfanyl)-D-ribose + ATP = 5-(methylsulfanyl)-alpha-D-ribose 1-phosphate + ADP + H(+). The protein operates within amino-acid biosynthesis; L-methionine biosynthesis via salvage pathway; S-methyl-5-thio-alpha-D-ribose 1-phosphate from S-methyl-5'-thioadenosine (hydrolase route): step 2/2. Its function is as follows. Catalyzes the phosphorylation of methylthioribose into methylthioribose-1-phosphate. This chain is Methylthioribose kinase, found in Pectobacterium atrosepticum (strain SCRI 1043 / ATCC BAA-672) (Erwinia carotovora subsp. atroseptica).